We begin with the raw amino-acid sequence, 781 residues long: 5-methyltetrahydropteroyltriglutamate--homocysteine methyltransferase (781 aa).

Residues 20–23 and K131 contribute to the 5-methyltetrahydropteroyltri-L-glutamate site; that span reads RELK. L-homocysteine contacts are provided by residues 453–455 and E506; that span reads IGS. L-methionine is bound by residues 453–455 and E506; that span reads IGS. Residues 537-538 and W583 each bind 5-methyltetrahydropteroyltri-L-glutamate; that span reads RC. Position 621 (D621) interacts with L-homocysteine. D621 serves as a coordination point for L-methionine. Residue E627 participates in 5-methyltetrahydropteroyltri-L-glutamate binding. The Zn(2+) site is built by H663, C665, and E687. H716 acts as the Proton donor in catalysis. Residue C748 participates in Zn(2+) binding.

The protein belongs to the vitamin-B12 independent methionine synthase family. Requires Zn(2+) as cofactor.

It catalyses the reaction 5-methyltetrahydropteroyltri-L-glutamate + L-homocysteine = tetrahydropteroyltri-L-glutamate + L-methionine. It functions in the pathway amino-acid biosynthesis; L-methionine biosynthesis via de novo pathway; L-methionine from L-homocysteine (MetE route): step 1/1. In terms of biological role, catalyzes the transfer of a methyl group from 5-methyltetrahydrofolate to homocysteine resulting in methionine formation. The polypeptide is 5-methyltetrahydropteroyltriglutamate--homocysteine methyltransferase (Bradyrhizobium diazoefficiens (strain JCM 10833 / BCRC 13528 / IAM 13628 / NBRC 14792 / USDA 110)).